The chain runs to 101 residues: NADH-quinone oxidoreductase subunit K (101 aa).

The next 3 helical transmembrane spans lie at 4–24 (LAHFLVLGAILFAISIVGIFL), 30–50 (IVLLMAIELMLLAVNMNFVAF), and 61–81 (VFVFFILTVAAAESAIGLAIL).

It belongs to the complex I subunit 4L family. As to quaternary structure, NDH-1 is composed of 14 different subunits. Subunits NuoA, H, J, K, L, M, N constitute the membrane sector of the complex.

The protein resides in the cell inner membrane. The enzyme catalyses a quinone + NADH + 5 H(+)(in) = a quinol + NAD(+) + 4 H(+)(out). In terms of biological role, NDH-1 shuttles electrons from NADH, via FMN and iron-sulfur (Fe-S) centers, to quinones in the respiratory chain. The immediate electron acceptor for the enzyme in this species is believed to be ubiquinone. Couples the redox reaction to proton translocation (for every two electrons transferred, four hydrogen ions are translocated across the cytoplasmic membrane), and thus conserves the redox energy in a proton gradient. In Cupriavidus pinatubonensis (strain JMP 134 / LMG 1197) (Cupriavidus necator (strain JMP 134)), this protein is NADH-quinone oxidoreductase subunit K.